The following is a 492-amino-acid chain: Glycerol kinase 1 (492 aa).

Residue Thr-10 coordinates ADP. Thr-10 and Ser-11 together coordinate ATP. A sn-glycerol 3-phosphate-binding site is contributed by Thr-10. Residue Lys-14 coordinates ADP. Sn-glycerol 3-phosphate-binding residues include Arg-80, Glu-81, Tyr-132, and Asp-241. Glycerol-binding residues include Arg-80, Glu-81, Tyr-132, and Asp-241. 4 residues coordinate ADP: Thr-263, Gly-306, Gly-407, and Asn-411. ATP is bound by residues Thr-263, Gly-306, and Gly-407.

Belongs to the FGGY kinase family.

It catalyses the reaction glycerol + ATP = sn-glycerol 3-phosphate + ADP + H(+). Its pathway is polyol metabolism; glycerol degradation via glycerol kinase pathway; sn-glycerol 3-phosphate from glycerol: step 1/1. Its activity is regulated as follows. Inhibited by fructose 1,6-bisphosphate (FBP). Key enzyme in the regulation of glycerol uptake and metabolism. Catalyzes the phosphorylation of glycerol to yield sn-glycerol 3-phosphate. This Thermotoga maritima (strain ATCC 43589 / DSM 3109 / JCM 10099 / NBRC 100826 / MSB8) protein is Glycerol kinase 1.